The primary structure comprises 380 residues: Cytochrome b (380 aa).

4 helical membrane passes run 33–53, 77–98, 113–133, and 178–198; these read FGSL…FLAM, WLIR…YLHV, WNIG…GYVL, and FFAF…IHLL. Residues histidine 83 and histidine 97 each coordinate heme b. Heme b contacts are provided by histidine 182 and histidine 196. Histidine 201 provides a ligand contact to a ubiquinone. The next 4 membrane-spanning stretches (helical) occupy residues 226-246, 288-308, 320-340, and 347-367; these read YKDL…ALFS, LGGV…PMLH, PSQI…WIGG, and FVLI…IALP.

It belongs to the cytochrome b family. As to quaternary structure, the cytochrome bc1 complex contains 3 respiratory subunits (MT-CYB, CYC1 and UQCRFS1), 2 core proteins (UQCRC1 and UQCRC2) and probably 6 low-molecular weight proteins. Requires heme b as cofactor.

Its subcellular location is the mitochondrion inner membrane. Component of the ubiquinol-cytochrome c reductase complex (complex III or cytochrome b-c1 complex) that is part of the mitochondrial respiratory chain. The b-c1 complex mediates electron transfer from ubiquinol to cytochrome c. Contributes to the generation of a proton gradient across the mitochondrial membrane that is then used for ATP synthesis. This chain is Cytochrome b (mt-cyb), found in Acipenser sinensis (Chinese sturgeon).